The chain runs to 382 residues: Deoxyhypusine synthase (382 aa).

NAD(+) contacts are provided by residues 108–112 (SNLIS), 134–136 (TAG), glutamate 140, and aspartate 257. Residue 139–140 (EE) coordinates spermidine. Position 262 (aspartate 262) interacts with spermidine. An NAD(+)-binding site is contributed by glycine 304. Histidine 309 contacts spermidine. 329 to 330 (TG) contributes to the NAD(+) binding site. Residues 335–337 (GSD) and 344–350 (EAVSWGK) contribute to the spermidine site. Lysine 350 (nucleophile) is an active-site residue. An NAD(+)-binding site is contributed by 363–364 (DV).

It belongs to the deoxyhypusine synthase family. NAD(+) serves as cofactor.

It catalyses the reaction [eIF5A protein]-L-lysine + spermidine = [eIF5A protein]-deoxyhypusine + propane-1,3-diamine. The protein operates within protein modification; eIF5A hypusination. Catalyzes the NAD-dependent oxidative cleavage of spermidine and the subsequent transfer of the butylamine moiety of spermidine to the epsilon-amino group of a specific lysine residue of the eIF-5A precursor protein to form the intermediate deoxyhypusine residue. The protein is Deoxyhypusine synthase (DYS1) of Eremothecium gossypii (strain ATCC 10895 / CBS 109.51 / FGSC 9923 / NRRL Y-1056) (Yeast).